The chain runs to 387 residues: BarH-like 2 homeobox protein (387 aa).

3 disordered regions span residues 1 to 145, 157 to 240, and 367 to 387; these read MTME…FLIK, CAPY…TAFS, and PGGQPALNPLSSPIPGTPHPR. Positions 7-24 are enriched in polar residues; it reads SGSSFGIDTILSSASSGS. The segment covering 100-113 has biased composition (low complexity); that stretch reads APTQSLQPLPQQQQ. The span at 114–126 shows a compositional bias: pro residues; it reads PLPPQQPPPPPPQ. The span at 127-141 shows a compositional bias: low complexity; that stretch reads QLGSAASAPRTSTSS. Over residues 160 to 178 the composition is skewed to polar residues; the sequence is YSTSVSSPHHTPKQESNAV. The segment covering 180-220 has biased composition (basic and acidic residues); sequence ESFRPKLEQEDSKTKLDKREDSQSDIKCHGTKEEGDREITS. Residues 232 to 291 constitute a DNA-binding region (homeobox); that stretch reads PRKARTAFSDHQLNQLERSFERQKYLSVQDRMDLAAALNLTDTQVKTWYQNRRTKWKRQT.

The protein belongs to the BAR homeobox family.

It localises to the nucleus. Functionally, potential regulator of neural basic helix-loop-helix genes. In Homo sapiens (Human), this protein is BarH-like 2 homeobox protein (BARHL2).